Here is a 185-residue protein sequence, read N- to C-terminus: Hypoxanthine/guanine phosphoribosyltransferase (185 aa).

It belongs to the purine/pyrimidine phosphoribosyltransferase family. Archaeal HPRT subfamily. As to quaternary structure, homodimer.

Its subcellular location is the cytoplasm. The enzyme catalyses IMP + diphosphate = hypoxanthine + 5-phospho-alpha-D-ribose 1-diphosphate. It catalyses the reaction GMP + diphosphate = guanine + 5-phospho-alpha-D-ribose 1-diphosphate. The protein operates within purine metabolism; IMP biosynthesis via salvage pathway; IMP from hypoxanthine: step 1/1. Its function is as follows. Catalyzes a salvage reaction resulting in the formation of IMP that is energically less costly than de novo synthesis. This chain is Hypoxanthine/guanine phosphoribosyltransferase, found in Methanococcus maripaludis (strain C6 / ATCC BAA-1332).